The following is a 158-amino-acid chain: Cyclic pyranopterin monophosphate synthase (158 aa).

Residues 75 to 77 and 113 to 114 each bind substrate; these read LCH and ME. D128 is a catalytic residue.

It belongs to the MoaC family. In terms of assembly, homohexamer; trimer of dimers.

It carries out the reaction (8S)-3',8-cyclo-7,8-dihydroguanosine 5'-triphosphate = cyclic pyranopterin phosphate + diphosphate. Its pathway is cofactor biosynthesis; molybdopterin biosynthesis. Catalyzes the conversion of (8S)-3',8-cyclo-7,8-dihydroguanosine 5'-triphosphate to cyclic pyranopterin monophosphate (cPMP). The polypeptide is Cyclic pyranopterin monophosphate synthase (Actinobacillus succinogenes (strain ATCC 55618 / DSM 22257 / CCUG 43843 / 130Z)).